Consider the following 354-residue polypeptide: MGFCIPLRLKMLKRGSRKFSSMLARRHTPKKMNIVTDLENRLKKNSYIENTNQGNILMDSIFVSTMSVETLFGSYITDDSDDYELKDLLNVTYNIKPVIVPDIKLDAVLDRDGNFRPADCFLVKLKHRDGFTKGALYLGHSAGFTATICLKNEGVSGLYIPGTSVIRTNICQGDTIVSRSSRGVQFLLQIGGEAIFLIVSLCPTKKLVETGFVIPNISSNDNAKIAARILSEKRKDTITHIDTLIQYGQQLELAYYNSCMLTEFLHYCNLYANTIKESLLKETIQKDINITHTNITTLLNETAKVIKLVKSLVDKEDTDIVNNFITKEIKNCGGVKNRDTIVNSLSLSNLDFYL.

This sequence belongs to the orthopoxvirus OPG055 family.

Stimulates increases in peripheral microtubule dynamics and may increase the motility of the infected cells, contributing to cell-to-cell spread of the virus. Seems to inhibit the signaling via the GTPase RHOA and DIAPH1/mDia. This Homo sapiens (Human) protein is Protein OPG055 (OPG055).